A 403-amino-acid chain; its full sequence is Eukaryotic translation initiation factor 3 subunit H (403 aa).

The 150-residue stretch at 57 to 206 (VRLDGLALTK…VKAYRLSPSF (150 aa)) folds into the MPN domain. The tract at residues 99–122 (ALPNPGRSNSERDEEEDRSSRNAT) is disordered.

Belongs to the eIF-3 subunit H family. In terms of assembly, component of the eukaryotic translation initiation factor 3 (eIF-3) complex.

The protein localises to the cytoplasm. Functionally, component of the eukaryotic translation initiation factor 3 (eIF-3) complex, which is involved in protein synthesis of a specialized repertoire of mRNAs and, together with other initiation factors, stimulates binding of mRNA and methionyl-tRNAi to the 40S ribosome. The eIF-3 complex specifically targets and initiates translation of a subset of mRNAs involved in cell proliferation. This chain is Eukaryotic translation initiation factor 3 subunit H, found in Mycosarcoma maydis (Corn smut fungus).